The primary structure comprises 213 residues: Anti-sigma-W factor RsiW (213 aa).

At 1–86 (MSCEQHYRTL…TNRFKVWMRR (86 aa)) the chain is on the cytoplasmic side. 3 residues coordinate Zn(2+): H30, C34, and C37. Residues 87 to 109 (YPLAVAAAVFVLLMSTSLFSMWS) traverse the membrane as a helical segment. Residues 110–213 (SDGEHVTVTG…ISDEKNSPSS (104 aa)) lie on the Extracellular side of the membrane.

This sequence belongs to the zinc-associated anti-sigma factor (ZAS) superfamily. Anti-sigma-W factor family. Requires Zn(2+) as cofactor. In terms of processing, is processed by three successive proteolytic events. First, the extracellular region of RsiW is cleaved by PrsW (Site-1 cleavage) in response to cell envelope stresses. Next, it undergoes cleavage at an intramembrane site (Site-2 cleavage) mediated by RasP. This cleavage uncovers a cryptic proteolytic tag with conserved alanine residues in the transmembrane segment, that is recognized mainly by the ClpXP protease, which completely degrades the protein in the cytoplasm and leads to the induction of the sigma-W-controlled genes.

It is found in the membrane. In terms of biological role, is the anti-sigma factor for SigW. The presence of RsiW leads to the inactivation of SigW, and its proteolytic destruction to sigma-W activation. The polypeptide is Anti-sigma-W factor RsiW (rsiW) (Halalkalibacterium halodurans (strain ATCC BAA-125 / DSM 18197 / FERM 7344 / JCM 9153 / C-125) (Bacillus halodurans)).